Here is a 268-residue protein sequence, read N- to C-terminus: Cell division coordinator CpoB (268 aa).

The first 21 residues, Met1–Ala21, serve as a signal peptide directing secretion. The stretch at Gln58 to Arg94 forms a coiled coil. The interval Ser104 to Ala146 is disordered. Low complexity predominate over residues Ser121–Gly143. 3 TPR repeats span residues Lys149–Ser181, Gly185–His218, and Pro222–Thr255.

This sequence belongs to the CpoB family.

The protein localises to the periplasm. Functionally, mediates coordination of peptidoglycan synthesis and outer membrane constriction during cell division. This chain is Cell division coordinator CpoB, found in Pseudomonas putida (strain ATCC 47054 / DSM 6125 / CFBP 8728 / NCIMB 11950 / KT2440).